A 190-amino-acid chain; its full sequence is UPF0316 protein Mboo_0605 (190 aa).

Transmembrane regions (helical) follow at residues 3-23 (IGTF…RIAE), 41-61 (LAAY…GLVL), and 67-87 (FWNL…GMEI).

The protein belongs to the UPF0316 family.

It is found in the cell membrane. This chain is UPF0316 protein Mboo_0605, found in Methanoregula boonei (strain DSM 21154 / JCM 14090 / 6A8).